Reading from the N-terminus, the 844-residue chain is RING finger containing E3 ubiquitin-protein ligase WSV222 (844 aa).

Residue 229-236 (AEDDKGKT) participates in ATP binding. Residues 308 to 359 (CGVCATSVEEDENEGKTTSLSWYQMNCKHYIHCECLMGMCAAAGNVQCPMCR) form an RING-type; atypical zinc finger.

As to quaternary structure, interacts with host UBE2E1/UBCH6; this interaction results in WSV222 auto-ubiquitination. Interacts with host tumor suppressor-like protein.

The catalysed reaction is S-ubiquitinyl-[E2 ubiquitin-conjugating enzyme]-L-cysteine + [acceptor protein]-L-lysine = [E2 ubiquitin-conjugating enzyme]-L-cysteine + N(6)-ubiquitinyl-[acceptor protein]-L-lysine.. Its pathway is protein modification; protein ubiquitination. Probable E3 ubiquitin-protein ligase which accepts ubiquitin from the E2 ubiquitin-conjugating enzyme UBE2E1/UBCH6 in the form of a thioester and then directly transfers the ubiquitin to targeted substrates. Mediates ubiquitination of host tumor-suppressor-like protein (TSL) targeting it for degradation. Might function as an anti-apoptosis protein by counteracting TSL-induced apoptosis. The sequence is that of RING finger containing E3 ubiquitin-protein ligase WSV222 from White spot syndrome virus (isolate Shrimp/China/Tongan/1996) (WSSV).